The primary structure comprises 332 residues: Methionine synthase (332 aa).

His-211, Cys-213, and Cys-296 together coordinate Zn(2+).

The protein belongs to the archaeal MetE family. Zn(2+) is required as a cofactor.

It functions in the pathway amino-acid biosynthesis; L-methionine biosynthesis via de novo pathway. Its function is as follows. Catalyzes the transfer of a methyl group to L-homocysteine resulting in methionine formation. The physiological methyl donor is unknown. The sequence is that of Methionine synthase from Saccharolobus islandicus (strain Y.G.57.14 / Yellowstone #1) (Sulfolobus islandicus).